The following is a 145-amino-acid chain: D-aminoacyl-tRNA deacylase (145 aa).

Positions 137 to 138 match the Gly-cisPro motif, important for rejection of L-amino acids motif; the sequence is GP.

It belongs to the DTD family. Homodimer.

The protein resides in the cytoplasm. The enzyme catalyses glycyl-tRNA(Ala) + H2O = tRNA(Ala) + glycine + H(+). It carries out the reaction a D-aminoacyl-tRNA + H2O = a tRNA + a D-alpha-amino acid + H(+). Its function is as follows. An aminoacyl-tRNA editing enzyme that deacylates mischarged D-aminoacyl-tRNAs. Also deacylates mischarged glycyl-tRNA(Ala), protecting cells against glycine mischarging by AlaRS. Acts via tRNA-based rather than protein-based catalysis; rejects L-amino acids rather than detecting D-amino acids in the active site. By recycling D-aminoacyl-tRNA to D-amino acids and free tRNA molecules, this enzyme counteracts the toxicity associated with the formation of D-aminoacyl-tRNA entities in vivo and helps enforce protein L-homochirality. The chain is D-aminoacyl-tRNA deacylase from Francisella tularensis subsp. holarctica (strain LVS).